A 115-amino-acid polypeptide reads, in one-letter code: U2-ctenitoxin-Pn1b (115 aa).

The first 17 residues, 1 to 17, serve as a signal peptide directing secretion; that stretch reads MKVAVIILSILVLAAAS. A propeptide spanning residues 18-61 is cleaved from the precursor; that stretch reads ESIEEYREDFSRPNAMERSANDWIPTAPSAVERSADFAVEELER. Disulfide bonds link cysteine 64–cysteine 78, cysteine 71–cysteine 84, cysteine 75–cysteine 113, cysteine 77–cysteine 98, and cysteine 86–cysteine 96. A propeptide is located at residue lysine 115.

Belongs to the neurotoxin 03 (Tx2) family. 04 subfamily. In terms of tissue distribution, expressed by the venom gland.

The protein resides in the secreted. In terms of biological role, blocks voltage-gated sodium channels (Nav). This chain is U2-ctenitoxin-Pn1b, found in Phoneutria nigriventer (Brazilian armed spider).